Reading from the N-terminus, the 199-residue chain is MKFSPLLDELIQSLRCLPGVGPKSAQRMAFQLLERDRKAGLKLASALSSAMSDVGHCQSCRTYTEETLCPICTSHKRGTSSTICVVETPADVLAIEAGGHFTGRYFVLLGHLSPLDGVGPEELGLALLERHLASGDVAELILATNPTVEGEATAHFIADMARRHKVMISRIAHGVPVGGELEYVDSTTLALSFNGRLPL.

The segment at 57-72 (CQSCRTYTEETLCPIC) adopts a C4-type zinc-finger fold. The region spanning 81-176 (STICVVETPA…MISRIAHGVP (96 aa)) is the Toprim domain.

It belongs to the RecR family.

Its function is as follows. May play a role in DNA repair. It seems to be involved in an RecBC-independent recombinational process of DNA repair. It may act with RecF and RecO. This chain is Recombination protein RecR, found in Shewanella baltica (strain OS155 / ATCC BAA-1091).